Consider the following 474-residue polypeptide: Trigger factor (474 aa).

The 86-residue stretch at 165–250 folds into the PPIase FKBP-type domain; it reads GDRVTIDYLG…VKTVSKPDEL (86 aa). Basic and acidic residues predominate over residues 451-467; the sequence is VKKKTASDNKKSNEIKK. The disordered stretch occupies residues 451–474; the sequence is VKKKTASDNKKSNEIKKKSTMKKV.

This sequence belongs to the FKBP-type PPIase family. Tig subfamily.

The protein resides in the cytoplasm. It carries out the reaction [protein]-peptidylproline (omega=180) = [protein]-peptidylproline (omega=0). Involved in protein export. Acts as a chaperone by maintaining the newly synthesized protein in an open conformation. Functions as a peptidyl-prolyl cis-trans isomerase. The polypeptide is Trigger factor (Bartonella bacilliformis (strain ATCC 35685 / KC583 / Herrer 020/F12,63)).